Consider the following 36-residue polypeptide: MDTRLIVIAAPVLVAASWALFNIGRLAIQQIQRLKR.

At 1 to 4 (MDTR) the chain is on the lumenal side. Residues 5-23 (LIVIAAPVLVAASWALFNI) traverse the membrane as a helical segment. Residues 24–36 (GRLAIQQIQRLKR) lie on the Stromal side of the membrane.

Belongs to the PsbY family. As to quaternary structure, PSII is composed of 1 copy each of membrane proteins PsbA, PsbB, PsbC, PsbD, PsbE, PsbF, PsbH, PsbI, PsbJ, PsbK, PsbL, PsbM, PsbT, PsbX, PsbY, PsbZ, Psb30/Ycf12, at least 3 peripheral proteins of the oxygen-evolving complex and a large number of cofactors. It forms dimeric complexes.

Its subcellular location is the plastid. The protein localises to the chloroplast thylakoid membrane. Loosely associated component of the core of photosystem II (PSII), it is not always seen in crystals. PSII is a light-driven water plastoquinone oxidoreductase, using light energy to abstract electrons from H(2)O, generating a proton gradient subsequently used for ATP formation. The sequence is that of Photosystem II reaction center protein Y from Phaeodactylum tricornutum (strain CCAP 1055/1).